A 449-amino-acid polypeptide reads, in one-letter code: Tubulin alpha-2 chain (449 aa).

Q11 is a GTP binding site. K40 is modified (N6-acetyllysine). Residues S140, G144, T145, T179, N206, and N228 each coordinate GTP. E254 is an active-site residue.

It belongs to the tubulin family. In terms of assembly, dimer of alpha and beta chains. A typical microtubule is a hollow water-filled tube with an outer diameter of 25 nm and an inner diameter of 15 nM. Alpha-beta heterodimers associate head-to-tail to form protofilaments running lengthwise along the microtubule wall with the beta-tubulin subunit facing the microtubule plus end conferring a structural polarity. Microtubules usually have 13 protofilaments but different protofilament numbers can be found in some organisms and specialized cells. Post-translationally, acetylation of alpha chains at Lys-40 stabilizes microtubules and affects affinity and processivity of microtubule motors. This modification has a role in multiple cellular functions, ranging from cell motility, cell cycle progression or cell differentiation to intracellular trafficking and signaling.

It is found in the cytoplasm. The protein resides in the cytoskeleton. The enzyme catalyses GTP + H2O = GDP + phosphate + H(+). Tubulin is the major constituent of microtubules, a cylinder consisting of laterally associated linear protofilaments composed of alpha- and beta-tubulin heterodimers. Microtubules grow by the addition of GTP-tubulin dimers to the microtubule end, where a stabilizing cap forms. Below the cap, tubulin dimers are in GDP-bound state, owing to GTPase activity of alpha-tubulin. This Stylonychia lemnae (Ciliate) protein is Tubulin alpha-2 chain.